A 615-amino-acid polypeptide reads, in one-letter code: (+)-alpha-pinene synthase TPS2, chloroplastic (615 aa).

A chloroplast-targeting transit peptide spans 1 to 55 (MHCMAVRHFAPSSSLSIFSSTNINNHFFGREIFTPKTSNITTKKSRSRPNCNPIQ). Arginine 330, aspartate 367, aspartate 371, arginine 509, and aspartate 512 together coordinate (2E)-geranyl diphosphate. Mg(2+)-binding residues include aspartate 367 and aspartate 371. Residues 367–371 (DDIYD) carry the DDXXD motif motif. Residues aspartate 512, threonine 516, and glutamate 520 each contribute to the Mg(2+) site.

This sequence belongs to the terpene synthase family. Tpsb subfamily. Mg(2+) serves as cofactor. Mn(2+) is required as a cofactor. Requires K(+) as cofactor. As to expression, trichome.

The protein resides in the plastid. The protein localises to the chloroplast. The enzyme catalyses (2E)-geranyl diphosphate = (1R,5R)-alpha-pinene + diphosphate. It catalyses the reaction (2E)-geranyl diphosphate = (1R,5R)-beta-pinene + diphosphate. The catalysed reaction is (2E)-geranyl diphosphate = (4S)-limonene + diphosphate. It carries out the reaction (2E)-geranyl diphosphate = beta-myrcene + diphosphate. It participates in secondary metabolite biosynthesis; terpenoid biosynthesis. Its pathway is terpene metabolism; (-)-alpha-pinene biosynthesis; (-)-alpha-pinene from geranyl diphosphate: step 1/1. Involved in monoterpene (C10) olefins biosynthesis, constituants of cannabinoids and terpenoids-rich resins. Catalyzes mainly the conversion of (2E)-geranyl diphosphate to (+)-alpha-pinene, and also produces minor products such as (-)-limonene, (+)-beta-pinene and beta-myrcene. The sequence is that of (+)-alpha-pinene synthase TPS2, chloroplastic from Cannabis sativa (Hemp).